Reading from the N-terminus, the 283-residue chain is Pantothenate synthetase (283 aa).

Position 30 to 37 (30 to 37 (MGNLHSGH)) interacts with ATP. The active-site Proton donor is the histidine 37. Glutamine 61 serves as a coordination point for (R)-pantoate. Residue glutamine 61 coordinates beta-alanine. 149–152 (GEKD) lines the ATP pocket. Residue glutamine 155 coordinates (R)-pantoate. Residues valine 178 and 186–189 (LSSR) contribute to the ATP site.

It belongs to the pantothenate synthetase family. In terms of assembly, homodimer.

Its subcellular location is the cytoplasm. It carries out the reaction (R)-pantoate + beta-alanine + ATP = (R)-pantothenate + AMP + diphosphate + H(+). Its pathway is cofactor biosynthesis; (R)-pantothenate biosynthesis; (R)-pantothenate from (R)-pantoate and beta-alanine: step 1/1. Its function is as follows. Catalyzes the condensation of pantoate with beta-alanine in an ATP-dependent reaction via a pantoyl-adenylate intermediate. This chain is Pantothenate synthetase, found in Pseudomonas savastanoi pv. phaseolicola (strain 1448A / Race 6) (Pseudomonas syringae pv. phaseolicola (strain 1448A / Race 6)).